Here is a 76-residue protein sequence, read N- to C-terminus: Adropin (76 aa).

Positions 1–33 (MGAALSQGALIAIICNGLVGFLLLLLWVILCWA) are cleaved as a signal peptide. The disordered stretch occupies residues 41-76 (IDSLSESSPNSSPGPCPEKAPPPQKPSHEGSYLLQP). The segment covering 52–65 (SPGPCPEKAPPPQK) has biased composition (pro residues).

It is found in the secreted. Involved in the regulation of glucose homeostasis and lipid metabolism. This Bos taurus (Bovine) protein is Adropin (ENHO).